Consider the following 1318-residue polypeptide: Major tegument protein (1318 aa).

The protein belongs to the herpesviridae MTP family. Interacts with host DAXX; this interaction disrupts the chromatin remodeling complex ATRX:DAXX and thus allows viral transcription. Interacts with host SMC6; this interaction targets SMC5-SMC6 complex for proteasomal degradation.

It localises to the virion tegument. It is found in the host nucleus. Tegument protein that plays a role in the inhibition of host intrinsic defenses to promote viral early gene activation. Interacts with host DAXX and thereby disrupts the complex between DAXX and ATRX. Suppresses the DAXX-ATRX dependent deposition of histone H3.3 on viral chromatin allowing viral transcription. Targets also host SMC5/6 for proteasomal degradation in a CUL7 and calpain-dependent manner to support nuclear membrane-less replication compartment formation and lytic virus replication. The polypeptide is Major tegument protein (Homo sapiens (Human)).